We begin with the raw amino-acid sequence, 143 residues long: UPF0651 protein P31B10.02, mitochondrial (143 aa).

The Oxidoreductase-like domain maps to 48 to 93 (IYDGIRVPPKPEEPLNCCQSGCAICVWDVYADDLEEYNRARRKAKR).

The protein belongs to the UPF0651 family.

It is found in the mitochondrion. This Schizosaccharomyces pombe (strain 972 / ATCC 24843) (Fission yeast) protein is UPF0651 protein P31B10.02, mitochondrial.